A 1072-amino-acid chain; its full sequence is DNA-directed RNA polymerase subunit beta (1072 aa).

Belongs to the RNA polymerase beta chain family. In terms of assembly, in plastids the minimal PEP RNA polymerase catalytic core is composed of four subunits: alpha, beta, beta', and beta''. When a (nuclear-encoded) sigma factor is associated with the core the holoenzyme is formed, which can initiate transcription.

It localises to the plastid. The protein resides in the chloroplast. It catalyses the reaction RNA(n) + a ribonucleoside 5'-triphosphate = RNA(n+1) + diphosphate. Its function is as follows. DNA-dependent RNA polymerase catalyzes the transcription of DNA into RNA using the four ribonucleoside triphosphates as substrates. This Amborella trichopoda protein is DNA-directed RNA polymerase subunit beta.